The sequence spans 778 residues: ATP synthase subunit beta (778 aa).

Positions 1–289 (MKENNKTIEA…IDIYEENEDL (289 aa)) are unknown. The interval 290-778 (MKLNTLKSDK…KPLNSENKSN (489 aa)) is ATP synthase subunit beta. Residue 447-454 (GGAGVGKT) coordinates ATP.

Belongs to the ATPase alpha/beta chains family. In terms of assembly, F-type ATPases have 2 components, CF(1) - the catalytic core - and CF(0) - the membrane proton channel. CF(1) has five subunits: alpha(3), beta(3), gamma(1), delta(1), epsilon(1). CF(0) has three main subunits: a(1), b(2) and c(9-12). The alpha and beta chains form an alternating ring which encloses part of the gamma chain. CF(1) is attached to CF(0) by a central stalk formed by the gamma and epsilon chains, while a peripheral stalk is formed by the delta and b chains.

Its subcellular location is the cell membrane. It catalyses the reaction ATP + H2O + 4 H(+)(in) = ADP + phosphate + 5 H(+)(out). Its function is as follows. Produces ATP from ADP in the presence of a proton gradient across the membrane. The catalytic sites are hosted primarily by the beta subunits. The chain is ATP synthase subunit beta (atpD) from Malacoplasma penetrans (strain HF-2) (Mycoplasma penetrans).